A 141-amino-acid polypeptide reads, in one-letter code: 4-hydroxybenzoyl-CoA thioesterase (141 aa).

D17 is a catalytic residue. Substrate contacts are provided by residues W47, 59-61 (TPI), and K90.

Belongs to the 4-hydroxybenzoyl-CoA thioesterase family. In terms of assembly, homotetramer.

The enzyme catalyses 4-hydroxybenzoyl-CoA + H2O = 4-hydroxybenzoate + CoA + H(+). Its pathway is xenobiotic degradation; 4-chlorobenzoate degradation; 4-hydroxybenzoate from 4-chlorobenzoate: step 3/3. With respect to regulation, unaffected by EDTA, Mg(2+), Mn(2+), Fe(2+), Ca(2+), Co(2+) and Zn(2+). Its function is as follows. Hydrolyzes 4-hydroxybenzoate-CoA, and to a lesser extent benzoyl-CoA and 4-chlorobenzoate-CoA. Not active against aliphatic acyl-CoA thioesters, including palmitoyl-CoA, hexanoyl-CoA and acetyl-CoA. The protein is 4-hydroxybenzoyl-CoA thioesterase of Pseudomonas sp. (strain CBS-3).